A 985-amino-acid chain; its full sequence is MSRIESLTRARIDRSKEQATKTREKEKMKEAKDARYTNGHLFTTISVSGMTMCYACNKSITAKEALICPTCNVTIHNRCKDTLANCTKVKQKQQKAALLRNNTALQSVSLRSKTTTRERPTSAIYPSDSFRQSLLGSRRGLSSLSLAKSVSTTNIAGHFNDESPLGLRQILSQSTDSLNMRNRTLSVESLIDEGVEVFYNELMSDFEMDEKDFEADSWSLAVDSSFLQQHKKEVMKKQDVIYELIQTELHHVRTLKIMTRLFRTGMLEELQMEPEVVQGLFPCVDELSDIHTRFLNQLLERRRQALCPGSTRNFVIHRLGDLLISQFSGSNAEQMRKTYSEFCSRHTKALKLYKELYARDKRFQQFIRKMTRSAVLKRHGVQECILLVTQRITKYPVLINRILQNSHGVEEEYQDLASALGLVKELLSNVDQDVHELEKEARLQEIYNRMDPRAQTPVPGKGPFGRDELLRRKLIHEGCLLWKTATGRFKDVLLLLMTDVLVFLQEKDQKYIFTSLDKPSVVSLQNLIVRDIANQAKGMFLISSGPPEMYEVHAASRDDRTTWIRVIQQSVRLCPSREDFPLIETEDKAYLRRIKTKLQQKNQALVELLQKNVELFAEMVHFQALKAGFVGMPPPALPRGLFRLESFESLRGERLLKDALREVEGLKDLLLGPCVDLPMTSREPALPLDSDSGSCPGVTANGEARTFNGSIELCRADSDSSQKDRNGNQLRSPQEEVLQPLINLYGLLHGLQAVVVQQERLMEALFPEGPERWEKLSRANSRDGEAGRAAVASVTPEKQATELALLQRQHTLLQEELRRCQRLGEERATEAGSLEARLRESEQARALLEREAEEIRRQLAALGQNEPLPAEAPWARRPLDPRRRSLPAGDALYLSFNPPQPSRGHDRLDLPVTVRSLHRPFDDREAQELGSPEDRLQDSSDPDTGSEEEVSSRLSPPHSPRDFTRMQDIPEETESRDGEPTASES.

Residues 1-32 (MSRIESLTRARIDRSKEQATKTREKEKMKEAK) are disordered. The Phorbol-ester/DAG-type zinc-finger motif lies at 39–86 (GHLFTTISVSGMTMCYACNKSITAKEALICPTCNVTIHNRCKDTLANC). 5 positions are modified to phosphoserine: serine 109, serine 122, serine 129, serine 133, and serine 137. Residues 131–161 (RQSLLGSRRGLSSLSLAKSVSTTNIAGHFND) form an interaction with DYNLT1 region. Serine 143 is subject to Phosphoserine; by PAK4. Serine 151, serine 163, serine 172, serine 174, and serine 177 each carry phosphoserine. Residues 236-433 (KKQDVIYELI…KELLSNVDQD (198 aa)) form the DH domain. The residue at position 354 (lysine 354) is an N6-acetyllysine. One can recognise a PH domain in the interval 473-572 (KLIHEGCLLW…WIRVIQQSVR (100 aa)). The stretch at 591 to 619 (LRRIKTKLQQKNQALVELLQKNVELFAEM) forms a coiled coil. Serine 646 and serine 649 each carry phosphoserine. The residue at position 680 (threonine 680) is a Phosphothreonine; by MAPK1 or MAPK3. Phosphoserine occurs at positions 692, 710, and 781. Threonine 795 carries the phosphothreonine modification. The stretch at 797–866 (EKQATELALL…RQLAALGQNE (70 aa)) forms a coiled coil. A Phosphoserine modification is found at serine 885. Disordered stretches follow at residues 890–909 (DALY…DRLD) and 918–985 (HRPF…ASES). The residue at position 893 (tyrosine 893) is a Phosphotyrosine. Serine 895 bears the Phosphoserine; by PAK4 mark. Residues 919–938 (RPFDDREAQELGSPEDRLQD) are compositionally biased toward basic and acidic residues. Phosphoserine is present on residues serine 931, serine 939, and serine 940. The segment covering 940–949 (SDPDTGSEEE) has biased composition (acidic residues). At threonine 944 the chain carries Phosphothreonine. Residues serine 946, serine 951, serine 952, serine 955, and serine 959 each carry the phosphoserine modification.

As to quaternary structure, found in a complex composed at least of ARHGEF2, NOD2 and RIPK2. Interacts with RIPK2; the interaction mediates tyrosine phosphorylation of RIPK2 by Src kinase CSK. Interacts with RIPK1 and RIPK3. Interacts with YWHAZ/14-3-3 zeta; when phosphorylated at Ser-885. Interacts with the kinases PAK4, AURKA and MAPK1. Interacts with RHOA and RAC1. Interacts with NOD1. Interacts (via the N- terminal zinc finger) with CAPN6 (via domain II). Interacts with DYNLT1. Post-translationally, phosphorylation of Ser-885 by PAK1 induces binding to protein YWHAZ, promoting its relocation to microtubules and the inhibition of its activity. Phosphorylated by AURKA and CDK1 during mitosis, which negatively regulates its activity. Phosphorylation by MAPK1 or MAPK3 increases nucleotide exchange activity. Phosphorylation by PAK4 releases GEF-H1 from the microtubules. Phosphorylated on serine, threonine and tyrosine residues in a RIPK2-dependent manner. Ubiquitous, with the exception of liver tissue. Levels are high in hemopoietic tissues (thymus, spleen, bone marrow) as well as in kidney and lung. Expressed in the germinal zones of both the neocortex and the cerebellum and in the pontine gray nuclei.

The protein resides in the cytoplasm. The protein localises to the cytoskeleton. It localises to the cell junction. It is found in the tight junction. Its subcellular location is the golgi apparatus. The protein resides in the spindle. The protein localises to the cytoplasmic vesicle. Functionally, activates Rho-GTPases by promoting the exchange of GDP for GTP. May be involved in epithelial barrier permeability, cell motility and polarization, dendritic spine morphology, antigen presentation, leukemic cell differentiation, cell cycle regulation, innate immune response, and cancer. Binds Rac-GTPases, but does not seem to promote nucleotide exchange activity toward Rac-GTPases. May stimulate instead the cortical activity of Rac. Inactive toward CDC42, TC10, or Ras-GTPases. Forms an intracellular sensing system along with NOD1 for the detection of microbial effectors during cell invasion by pathogens. Involved in innate immune signaling transduction pathway promoting cytokine IL6/interleukin-6 and TNF-alpha secretion in macrophage upon stimulation by bacterial peptidoglycans; acts as a signaling intermediate between NOD2 receptor and RIPK2 kinase. Contributes to the tyrosine phosphorylation of RIPK2 through Src tyrosine kinase leading to NF-kappaB activation by NOD2. Overexpression activates Rho-, but not Rac-GTPases, and increases paracellular permeability. Involved in neuronal progenitor cell division and differentiation. Involved in the migration of precerebellar neurons. The protein is Rho guanine nucleotide exchange factor 2 (Arhgef2) of Mus musculus (Mouse).